The following is a 69-amino-acid chain: Small archaeal modifier protein 2 (69 aa).

Residue Lys55 forms a Glycyl lysine isopeptide (Lys-Gly) (interchain with G-Cter in SAMP2) linkage. Residue Gly69 is modified to 1-thioglycine; alternate. Gly69 carries the glycyl adenylate; alternate modification. Residue Gly69 forms a Glycyl lysine isopeptide (Gly-Lys) (interchain with K-? in acceptor proteins); alternate linkage.

In terms of processing, the C-terminal glycine is likely acyl-adenylated (-COAMP) by UbaA, and also probably thiocarboxylated (-COSH) to function in sulfur transfer.

Functionally, functions as a protein modifier covalently attached to lysine residues of substrate proteins, as well as a sulfur carrier in tRNA thiolation. The protein modification process is termed sampylation and involves the formation of an isopeptide bond between the SAMP2 C-terminal glycine carboxylate and the epsilon-amino group of lysine residues on target proteins. Is able to form polymeric chains with itself likely at Lys-55, similar to ubiquitin and other ubiquitin-like proteins. May serve as a proteolytic signal in the cell to target proteins for degradation by proteasomes. In Pyrococcus furiosus (strain ATCC 43587 / DSM 3638 / JCM 8422 / Vc1), this protein is Small archaeal modifier protein 2.